The primary structure comprises 580 residues: Probable alpha-1,3-mannosyltransferase MNT4 (580 aa).

Topologically, residues 1–10 (MVLRIRRIKK) are cytoplasmic. A helical; Signal-anchor for type II membrane protein membrane pass occupies residues 11–29 (LAPLIFTSLLSLIVLFRVY). Residues 30 to 580 (RQYPFSDHFE…KVVELWNKVV (551 aa)) lie on the Lumenal side of the membrane. Asn132, Asn167, Asn223, and Asn349 each carry an N-linked (GlcNAc...) asparagine glycan.

The protein belongs to the MNN1/MNT family.

It localises to the membrane. This is Probable alpha-1,3-mannosyltransferase MNT4 (MNT4) from Saccharomyces cerevisiae (strain ATCC 204508 / S288c) (Baker's yeast).